The following is a 138-amino-acid chain: Venom allergen 2 (138 aa).

The signal sequence occupies residues Met-1 to Ala-19.

Belongs to the ant venom allergen 2/4 family. As to quaternary structure, homodimer; disulfide-linked. Expressed by the venom gland.

Its subcellular location is the secreted. This is Venom allergen 2 from Solenopsis saevissima (Fire ant).